The following is a 279-amino-acid chain: Inhibitor of growth protein 1 (279 aa).

Residues 115–206 (AHQDISDGTG…EASPADLPID (92 aa)) are disordered. Residue Lys135 forms a Glycyl lysine isopeptide (Lys-Gly) (interchain with G-Cter in SUMO2) linkage. The span at 154–171 (RNNENRENASNNHDHDDI) shows a compositional bias: basic and acidic residues. Positions 179 to 191 (KKAKTSKKKKRSK) are enriched in basic residues. The PHD-type zinc-finger motif lies at 210–259 (PTYCLCNQVSYGEMIGCDNDECPIEWFHFSCVGLNHKPKGKWYCPKCRGE). Cys213, Cys215, Cys226, Cys231, His237, Cys240, Cys253, and Cys256 together coordinate Zn(2+). The interval 262–279 (KTMDKALEKSKKERAYNR) is PBR.

Belongs to the ING family. As to quaternary structure, interacts with H3K4me3 and to a lesser extent with H3K4me2. Isoform 2 interacts with RSL1D1. In the adult, widely expressed with highest levels in thymus and testis.

It is found in the nucleus. Functionally, isoform 1 inhibits p53-dependent transcriptional activation and may function as an oncoprotein. Isoform 2 acts as a negative growth regulator by cooperating with p53 in transcriptional activation of p53-responsive genes and may act as a tumor suppressor. This Mus musculus (Mouse) protein is Inhibitor of growth protein 1 (Ing1).